A 64-amino-acid polypeptide reads, in one-letter code: DNA-directed RNA polymerase subunit Rpo10 (64 aa).

The Zn(2+) site is built by Cys7, Cys10, Cys45, and Cys46.

It belongs to the archaeal Rpo10/eukaryotic RPB10 RNA polymerase subunit family. In terms of assembly, part of the RNA polymerase complex. Zn(2+) is required as a cofactor.

Its subcellular location is the cytoplasm. It catalyses the reaction RNA(n) + a ribonucleoside 5'-triphosphate = RNA(n+1) + diphosphate. In terms of biological role, DNA-dependent RNA polymerase (RNAP) catalyzes the transcription of DNA into RNA using the four ribonucleoside triphosphates as substrates. The chain is DNA-directed RNA polymerase subunit Rpo10 from Haloquadratum walsbyi (strain DSM 16790 / HBSQ001).